The following is a 265-amino-acid chain: Phosphate import ATP-binding protein PstB (265 aa).

The 250-residue stretch at 11–260 (VSADEVKIAA…PRDPRTESYI (250 aa)) folds into the ABC transporter domain. 50 to 57 (GPSGCGKS) contributes to the ATP binding site.

The protein belongs to the ABC transporter superfamily. Phosphate importer (TC 3.A.1.7) family. The complex is composed of two ATP-binding proteins (PstB), two transmembrane proteins (PstC and PstA) and a solute-binding protein (PstS).

Its subcellular location is the cell inner membrane. It catalyses the reaction phosphate(out) + ATP + H2O = ADP + 2 phosphate(in) + H(+). Part of the ABC transporter complex PstSACB involved in phosphate import. Responsible for energy coupling to the transport system. The protein is Phosphate import ATP-binding protein PstB of Cereibacter sphaeroides (strain ATCC 17023 / DSM 158 / JCM 6121 / CCUG 31486 / LMG 2827 / NBRC 12203 / NCIMB 8253 / ATH 2.4.1.) (Rhodobacter sphaeroides).